The following is a 154-amino-acid chain: uncharacterized protein (154 aa).

The HotDog ACOT-type domain occupies 13 to 128 (SKGVLLLRTL…VFTFVAVDNN (116 aa)).

This sequence belongs to the acyl coenzyme A hydrolase family.

This is an uncharacterized protein from Haemophilus influenzae (strain ATCC 51907 / DSM 11121 / KW20 / Rd).